The sequence spans 461 residues: MKVTQKPKIIFIPYPAQGHVTPMLHLASAFLSRGFSPVVMTPESIHRRISATNEDLGITFLALSDGQDRPDAPPSDFFSIENSMENIMPPQLERLLLEEDLDVACVVVDLLASWAIGVADRCGVPVAGFWPVMFAAYRLIQAIPELVRTGLVSQKGCPRQLEKTIVQPEQPLLSAEDLPWLIGTPKAQKKRFKFWQRTLERTKSLRWILTSSFKDEYEDVDNHKASYKKSNDLNKENNGQNPQILHLGPLHNQEATNNITITKTSFWEEDMSCLGWLQEQNPNSVIYISFGSWVSPIGESNIQTLALALEASGRPFLWALNRVWQEGLPPGFVHRVTITKNQGRIVSWAPQLEVLRNDSVGCYVTHCGWNSTMEAVASSRRLLCYPVAGDQFVNCKYIVDVWKIGVRLSGFGEKEVEDGLRKVMEDQDMGERLRKLRDRAMGNEARLSSEMNFTFLKNELN.

UDP-alpha-D-glucose is bound by residues S292, 349–351, 366–374, and 388–391; these read APQ, HCGWNSTME, and AGDQ.

The protein belongs to the UDP-glycosyltransferase family.

The chain is UDP-glycosyltransferase 82A1 (UGT82A1) from Arabidopsis thaliana (Mouse-ear cress).